The sequence spans 427 residues: Trigger factor (427 aa).

Residues 163–248 (GDTVVIDFVG…IHEVKAKEVP (86 aa)) form the PPIase FKBP-type domain.

This sequence belongs to the FKBP-type PPIase family. Tig subfamily.

It localises to the cytoplasm. The catalysed reaction is [protein]-peptidylproline (omega=180) = [protein]-peptidylproline (omega=0). Its function is as follows. Involved in protein export. Acts as a chaperone by maintaining the newly synthesized protein in an open conformation. Functions as a peptidyl-prolyl cis-trans isomerase. The polypeptide is Trigger factor (Streptococcus suis (strain 98HAH33)).